Reading from the N-terminus, the 513-residue chain is ATP synthase subunit alpha (513 aa).

An ATP-binding site is contributed by 169–176; that stretch reads GDRQTGKT.

It belongs to the ATPase alpha/beta chains family. F-type ATPases have 2 components, CF(1) - the catalytic core - and CF(0) - the membrane proton channel. CF(1) has five subunits: alpha(3), beta(3), gamma(1), delta(1), epsilon(1). CF(0) has three main subunits: a(1), b(2) and c(9-12). The alpha and beta chains form an alternating ring which encloses part of the gamma chain. CF(1) is attached to CF(0) by a central stalk formed by the gamma and epsilon chains, while a peripheral stalk is formed by the delta and b chains.

It is found in the cell inner membrane. It carries out the reaction ATP + H2O + 4 H(+)(in) = ADP + phosphate + 5 H(+)(out). Functionally, produces ATP from ADP in the presence of a proton gradient across the membrane. The alpha chain is a regulatory subunit. This chain is ATP synthase subunit alpha, found in Proteus mirabilis (strain HI4320).